Consider the following 140-residue polypeptide: Ribonucleases P/MRP protein subunit POP7 (140 aa).

Residues 1–21 (MALKKNTHNKSTKRVTKHPSL) form a disordered region. At S115 the chain carries Phosphoserine.

The protein belongs to the histone-like Alba family. As to quaternary structure, component of nuclear RNase P and RNase MRP complexes. RNase P consists of an RNA moiety and at least 9 protein subunits including POP1, POP3, POP4, POP5, POP6, POP7, POP8, RPP1 and RPR2. RNase MRP complex consists of an RNA moiety and at least 10 protein subunits including POP1, POP3, POP4, POP5, POP6, POP7, POP8, RMP1, RPP1 and SNM1, many of which are shared with the RNase P complex.

It is found in the nucleus. The catalysed reaction is Endonucleolytic cleavage of RNA, removing 5'-extranucleotides from tRNA precursor.. Component of ribonuclease P, a protein complex that generates mature tRNA molecules by cleaving their 5'-ends. Also a component of RNase MRP, which cleaves pre-rRNA sequences. In Saccharomyces cerevisiae (strain ATCC 204508 / S288c) (Baker's yeast), this protein is Ribonucleases P/MRP protein subunit POP7 (POP7).